Reading from the N-terminus, the 300-residue chain is Ribosomal RNA small subunit methyltransferase H (300 aa).

Residues 33–35, aspartate 52, phenylalanine 86, aspartate 97, and glutamine 104 each bind S-adenosyl-L-methionine; that span reads AGH.

The protein belongs to the methyltransferase superfamily. RsmH family.

It is found in the cytoplasm. The enzyme catalyses cytidine(1402) in 16S rRNA + S-adenosyl-L-methionine = N(4)-methylcytidine(1402) in 16S rRNA + S-adenosyl-L-homocysteine + H(+). Specifically methylates the N4 position of cytidine in position 1402 (C1402) of 16S rRNA. This Aliarcobacter butzleri (strain RM4018) (Arcobacter butzleri) protein is Ribosomal RNA small subunit methyltransferase H.